We begin with the raw amino-acid sequence, 1074 residues long: Zinc finger protein 518B (1074 aa).

A compositionally biased stretch (polar residues) spans 12–24 (HLNGGHNSLTMSP). The disordered stretch occupies residues 12 to 36 (HLNGGHNSLTMSPKQPDANGAPRPN). 2 consecutive C2H2-type zinc fingers follow at residues 162–184 (FICS…LVKH) and 190–213 (YQCE…KRVH). Glycyl lysine isopeptide (Lys-Gly) (interchain with G-Cter in SUMO2) cross-links involve residues K482, K491, and K558. Residues 568–590 (SNRKQEDNQTEEHKAVSTVGQIS) are disordered. Residues 570 to 582 (RKQEDNQTEEHKA) show a composition bias toward basic and acidic residues. A Glycyl lysine isopeptide (Lys-Gly) (interchain with G-Cter in SUMO2) cross-link involves residue K594. Disordered regions lie at residues 603-632 (TGED…DGPV) and 678-704 (KPSS…KATS). Residues 604–622 (GEDRSQQPGDKPLELKNSE) are compositionally biased toward basic and acidic residues. Residues 693–704 (GQASKGTSKATS) are compositionally biased toward polar residues. Glycyl lysine isopeptide (Lys-Gly) (interchain with G-Cter in SUMO2) cross-links involve residues K809, K846, and K860. The segment at 1036-1058 (FKCWFCGRLYEDQEEWMSHGQRH) adopts a C2H2-type 3 zinc-finger fold.

This sequence belongs to the krueppel C2H2-type zinc-finger protein family.

Its subcellular location is the nucleus. In terms of biological role, through its association with the EHMT1-EHMT2/G9A and PRC2/EED-EZH2 histone methyltransferase complexes may function in gene silencing, regulating repressive post-translational methylation of histone tails at promoters of target genes. This Homo sapiens (Human) protein is Zinc finger protein 518B (ZNF518B).